We begin with the raw amino-acid sequence, 446 residues long: Nuclear distribution protein nudF (446 aa).

The 33-residue stretch at 9–41 folds into the LisH domain; it reads QAEELHKSMVAYLSSIKASQSSNTLREELGIGD. Residues 60–86 adopt a coiled-coil conformation; it reads TGIARLQRKILDLESKITSLQAELDSV. WD repeat units follow at residues 113–154, 156–196, 200–240, 243–282, 285–345, 347–386, 391–430, and 432–446; these read SHRD…RTLK, HMRG…ANIR, GHDH…CVRT, SNSI…PRAA, GHDN…IKTL, GHDN…RLVK, AHGH…PAFQ, and VIAT…RVFK.

Belongs to the WD repeat LIS1/nudF family. As to quaternary structure, self-associates. Interacts with nudE and dynein.

The protein resides in the cytoplasm. It localises to the cytoskeleton. Its subcellular location is the spindle pole. Positively regulates the activity of the minus-end directed microtubule motor protein dynein. May enhance dynein-mediated microtubule sliding by targeting dynein to the microtubule plus end. Required for nuclear migration during vegetative growth as well as development. Required for retrograde early endosome (EE) transport from the hyphal tip. Required for localization of dynein to the mitotic spindle poles. Recruits additional proteins to the dynein complex at SPBs. The chain is Nuclear distribution protein nudF from Aspergillus terreus (strain NIH 2624 / FGSC A1156).